The following is a 763-amino-acid chain: High glucose sensor RGT2 (763 aa).

Positions 1 to 28 (MNDSQNCLRQREENSHLNPGNDFGHHQG) are disordered. Residues 1–99 (MNDSQNCLRQ…PLPLRSNVMS (99 aa)) are Cytoplasmic-facing. The chain crosses the membrane as a helical span at residues 100–120 (VLVGIFVAVGGFLFGYDTGLI). At 121-144 (NSITDMPYVKTYIAPNHSYFTTSQ) the chain is on the extracellular side. The N-linked (GlcNAc...) asparagine glycan is linked to N136. Residues 145-165 (IAILVSFLSLGTFFGALIAPY) traverse the membrane as a helical segment. Residues 166–175 (ISDSYGRKPT) are Cytoplasmic-facing. A helical membrane pass occupies residues 176-196 (IMFSTAVIFSIGNSLQVASGG). L197 is a topological domain (extracellular). Residues 198–218 (VLLIVGRVISGIGIGIISAVV) traverse the membrane as a helical segment. Residues 219 to 231 (PLYQAEAAQKNLR) are Cytoplasmic-facing. Residues 232–252 (GAIISSYQWAITIGLLVSSAV) traverse the membrane as a helical segment. Over 253 to 266 (SQGTHSKNGPSSYR) the chain is Extracellular. A helical transmembrane segment spans residues 267–287 (IPIGLQYVWSSILAVGMIFLP). At 288-357 (ESPRYYVLKD…SENRPKQILR (70 aa)) the chain is on the cytoplasmic side. Residues 358–378 (IFTGIAIQAFQQASGINFIFY) form a helical membrane-spanning segment. Residues 379–393 (YGVNFFNNTGVDNSY) are Extracellular-facing. The N-linked (GlcNAc...) asparagine glycan is linked to N385. The chain crosses the membrane as a helical span at residues 394-414 (LVSFISYAVNVAFSIPGMYLV). The Cytoplasmic segment spans residues 415–421 (DRIGRRP). A helical transmembrane segment spans residues 422–442 (VLLAGGVIMAIANLVIAIVGV). The Extracellular portion of the chain corresponds to 443–452 (SEGKTVVASK). The chain crosses the membrane as a helical span at residues 453 to 473 (IMIAFICLFIAAFSATWGGVV). Residues 474-491 (WVVSAELYPLGVRSKCTA) lie on the Cytoplasmic side of the membrane. The chain crosses the membrane as a helical span at residues 492–512 (ICAAANWLVNFTCALITPYIV). Residues 513–524 (DVGSHTSSMGPK) are Extracellular-facing. The chain crosses the membrane as a helical span at residues 525-545 (IFFIWGGLNVVAVIVVYFAVY). The Cytoplasmic segment spans residues 546 to 763 (ETRGLTLEEI…SKHSQYTSPQ (218 aa)). The segment covering 725–737 (SSTTSNDTSFSPS) has biased composition (low complexity). A disordered region spans residues 725 to 763 (SSTTSNDTSFSPSHNSNARTSSNWTSDLASKHSQYTSPQ). Residues 738 to 763 (HNSNARTSSNWTSDLASKHSQYTSPQ) are compositionally biased toward polar residues.

It belongs to the major facilitator superfamily. Sugar transporter (TC 2.A.1.1) family. As to quaternary structure, interacts with YCK1. Interacts with MTH1 and STD1. Phosphorylated in the C-terminal tail on Yck consensus sites in a yeast casein kinases YCK1 and YCK2 (Yck)-dependent manner. This phosphorylation is required for interaction with HXT corepressors MTH1 and STD1 and ultimately HXT expression.

It localises to the cell membrane. Functionally, low-affinity high glucose sensor that is part of the sensor/receptor-repressor (SSR) glucose-signaling pathway, which detects extracellular glucose and induces expression of glucose transporters that bring glucose into the cell. The transporter-like sensor generates an intracellular signal in the presence of high levels of glucose to promote high glucose-induced expression of HXT1. Binding of glucose to the RGT2 transmembrane domain activates a downstream signaling cascade, leading to phosphorylation of the RGT1 corepressors MTH1 and STD1, targeting them for SCF(Grr1)-dependent ubiquitination and degradation. Depletion of the corepressors robs RGT1 of its ability to repress expression of HXT genes, leading to accumulation of glucose transporters in the plasma membrane. Even though RGT2 is similar to glucose transporters, it appears to be unable to transport glucose. This chain is High glucose sensor RGT2, found in Saccharomyces cerevisiae (strain ATCC 204508 / S288c) (Baker's yeast).